The following is a 392-amino-acid chain: Formate-dependent phosphoribosylglycinamide formyltransferase (392 aa).

N(1)-(5-phospho-beta-D-ribosyl)glycinamide contacts are provided by residues 22 to 23 and Glu82; that span reads EL. ATP is bound by residues Arg114, Lys155, 160–165, 195–198, and Glu203; these read SSGKGQ and EGVV. Residues 119–308 enclose the ATP-grasp domain; that stretch reads RLAAEELQLP…EFALHVRAFL (190 aa). 2 residues coordinate Mg(2+): Glu267 and Glu279. N(1)-(5-phospho-beta-D-ribosyl)glycinamide is bound by residues Asp286, Lys355, and 362 to 363; that span reads RR.

This sequence belongs to the PurK/PurT family. In terms of assembly, homodimer.

The enzyme catalyses N(1)-(5-phospho-beta-D-ribosyl)glycinamide + formate + ATP = N(2)-formyl-N(1)-(5-phospho-beta-D-ribosyl)glycinamide + ADP + phosphate + H(+). The protein operates within purine metabolism; IMP biosynthesis via de novo pathway; N(2)-formyl-N(1)-(5-phospho-D-ribosyl)glycinamide from N(1)-(5-phospho-D-ribosyl)glycinamide (formate route): step 1/1. Functionally, involved in the de novo purine biosynthesis. Catalyzes the transfer of formate to 5-phospho-ribosyl-glycinamide (GAR), producing 5-phospho-ribosyl-N-formylglycinamide (FGAR). Formate is provided by PurU via hydrolysis of 10-formyl-tetrahydrofolate. The protein is Formate-dependent phosphoribosylglycinamide formyltransferase of Escherichia coli O1:K1 / APEC.